A 513-amino-acid chain; its full sequence is Xylose import ATP-binding protein XylG (513 aa).

ABC transporter domains lie at 5 to 242 and 259 to 505; these read LEMK…VGRE and LRIE…LRSE. 37 to 44 serves as a coordination point for ATP; sequence GENGSGKS.

The protein belongs to the ABC transporter superfamily. Xylose importer (TC 3.A.1.2.4) family. The complex is composed of two ATP-binding proteins (XylG), two transmembrane proteins (XylH) and a solute-binding protein (XylF).

Its subcellular location is the cell inner membrane. The catalysed reaction is D-xylose(out) + ATP + H2O = D-xylose(in) + ADP + phosphate + H(+). In terms of biological role, part of the ABC transporter complex XylFGH involved in xylose import. Responsible for energy coupling to the transport system. This is Xylose import ATP-binding protein XylG from Shigella boydii serotype 4 (strain Sb227).